The sequence spans 609 residues: Phosphoenolpyruvate carboxykinase [GTP] (609 aa).

Substrate is bound by residues Arg81 and 220–222 (YGG). Residues Lys229 and His249 each coordinate Mn(2+). Ser271 lines the substrate pocket. 272-277 (ACGKTN) provides a ligand contact to GTP. The active site involves Cys273. Asp296 is a binding site for Mn(2+). 387–389 (NSR) contributes to the substrate binding site. Residues Arg389, Arg420, and 515-518 (FGEN) contribute to the GTP site.

Belongs to the phosphoenolpyruvate carboxykinase [GTP] family. As to quaternary structure, monomer. Requires Mn(2+) as cofactor.

The protein localises to the cytoplasm. The catalysed reaction is oxaloacetate + GTP = phosphoenolpyruvate + GDP + CO2. Its pathway is carbohydrate biosynthesis; gluconeogenesis. Its function is as follows. Catalyzes the conversion of oxaloacetate (OAA) to phosphoenolpyruvate (PEP), the rate-limiting step in the metabolic pathway that produces glucose from lactate and other precursors derived from the citric acid cycle. The protein is Phosphoenolpyruvate carboxykinase [GTP] of Mycolicibacterium paratuberculosis (strain ATCC BAA-968 / K-10) (Mycobacterium paratuberculosis).